Here is a 262-residue protein sequence, read N- to C-terminus: tRNA pseudouridine synthase B (262 aa).

Residue aspartate 77 is the Nucleophile of the active site.

This sequence belongs to the pseudouridine synthase TruB family. Type 1 subfamily.

The catalysed reaction is uridine(55) in tRNA = pseudouridine(55) in tRNA. Responsible for synthesis of pseudouridine from uracil-55 in the psi GC loop of transfer RNAs. The sequence is that of tRNA pseudouridine synthase B from Protochlamydia amoebophila (strain UWE25).